The chain runs to 647 residues: Knirps-related protein (647 aa).

Positions 11-87 form a DNA-binding region, nuclear receptor; sequence NQTCKVCGEP…VGMSKSGSRY (77 aa). NR C4-type zinc fingers lie at residues 14–34 and 51–75; these read CKVC…CEGC and CKNN…LKKC. Disordered stretches follow at residues 111-142, 196-274, 340-383, and 402-600; these read MAAH…KGMS, HKHP…LSPF, GAGQ…LLTN, and SQQQ…NSIL. Over residues 120–134 the composition is skewed to gly residues; the sequence is AGGGSSGGSGGGQGM. Low complexity-rich tracts occupy residues 200-223 and 232-247; these read VVAS…VSSV and GGKS…ADGS. A compositionally biased stretch (gly residues) spans 248–260; the sequence is HSGGGGGGGGGVT. 2 stretches are compositionally biased toward polar residues: residues 370–381 and 420–432; these read SPSTHANNNHLL and DYSI…PNSE. 2 stretches are compositionally biased toward basic and acidic residues: residues 433 to 443 and 480 to 491; these read SGRERVKSRQN and QEERTPAGEDPR. Residues 502–519 are compositionally biased toward low complexity; that stretch reads LSMKTTGSSLSSKSSSPE. The span at 520–541 shows a compositional bias: acidic residues; it reads IEPETEISSDVEKNDTDDDDED. Over residues 542-556 the composition is skewed to basic and acidic residues; sequence LKVTPEEEISVRETA. Polar residues predominate over residues 567–579; sequence TTETAKTSIENTH. Low complexity predominate over residues 580 to 599; sequence NNNNSISNNNNNNNNNNNSI.

The protein belongs to the nuclear hormone receptor family. NR0 subfamily.

It is found in the nucleus. The chain is Knirps-related protein (knrl) from Drosophila melanogaster (Fruit fly).